Here is a 391-residue protein sequence, read N- to C-terminus: Homocysteine-responsive endoplasmic reticulum-resident ubiquitin-like domain member 1 protein (391 aa).

Methionine 1 bears the N-acetylmethionine mark. Residues 1–263 (MESETEPEPV…VEEDDEINRD (263 aa)) are Cytoplasmic-facing. A Ubiquitin-like domain is found at 10 to 72 (VTLLVKSPNQ…LLDHQCLRDL (63 aa)). Residues 100–126 (KVAESTEEPAGSNRGQYPEDSSSDGLR) form a disordered region. A compositionally biased stretch (polar residues) spans 112 to 124 (NRGQYPEDSSSDG). An interaction with UBQLN1 region spans residues 115-200 (QYPEDSSSDG…ASGAFVPPPS (86 aa)). At serine 135 the chain carries Phosphoserine. Residues 264 to 284 (WLDWTYSAATFSVFLSILYFY) traverse the membrane as a helical segment. At 285-289 (SSLSR) the chain is on the lumenal side. A helical transmembrane segment spans residues 290 to 310 (FLMVMGATVVMYLHHVGWFPF). Topologically, residues 311–391 (RPRPVQNFPN…LPEGPPAIAN (81 aa)) are cytoplasmic. A disordered region spans residues 318–359 (FPNDGPPPDIVNQDPNNNLQEGTDPETEDPNHVPPDRGVLDG). The span at 346-357 (DPNHVPPDRGVL) shows a compositional bias: basic and acidic residues.

As to quaternary structure, interacts with PSEN1 and PSEN2. Interacts with UBXN6. Interacts with UBQLN1, UBQLN2 and UBQLN4. Component of the HRD1 complex, which comprises at least SYNV1/HRD1, FAM8A1, HERPUD1/HERP, OS9, SEL1L and UBE2J1. FAM8A1 binding to SYNV1 may promote recruitment of HERPUD1 to the HRD1 complex.

The protein localises to the endoplasmic reticulum membrane. In terms of biological role, component of the endoplasmic reticulum quality control (ERQC) system also called ER-associated degradation (ERAD) involved in ubiquitin-dependent degradation of misfolded endoplasmic reticulum proteins. Binds to ubiquilins and this interaction is required for efficient degradation of CD3D via the ERAD pathway. In Pongo abelii (Sumatran orangutan), this protein is Homocysteine-responsive endoplasmic reticulum-resident ubiquitin-like domain member 1 protein (HERPUD1).